The sequence spans 253 residues: Glucosamine-6-phosphate deaminase (253 aa).

Residue D65 is the Proton acceptor; for enolization step of the active site. N133 (for ring-opening step) is an active-site residue. H135 functions as the Proton acceptor; for ring-opening step in the catalytic mechanism. The For ring-opening step role is filled by E140.

This sequence belongs to the glucosamine/galactosamine-6-phosphate isomerase family. NagB subfamily.

The catalysed reaction is alpha-D-glucosamine 6-phosphate + H2O = beta-D-fructose 6-phosphate + NH4(+). The protein operates within amino-sugar metabolism; N-acetylneuraminate degradation; D-fructose 6-phosphate from N-acetylneuraminate: step 5/5. Its function is as follows. Catalyzes the reversible isomerization-deamination of glucosamine 6-phosphate (GlcN6P) to form fructose 6-phosphate (Fru6P) and ammonium ion. In Corynebacterium glutamicum (strain R), this protein is Glucosamine-6-phosphate deaminase.